The sequence spans 200 residues: Putative glucose-6-phosphate isomerase 2 (200 aa).

Fe cation contacts are provided by H92, H94, E101, and H140.

The protein belongs to the archaeal-type GPI family. Homodimer. Requires Fe cation as cofactor.

It is found in the cytoplasm. The enzyme catalyses alpha-D-glucose 6-phosphate = beta-D-fructose 6-phosphate. The protein operates within carbohydrate degradation; glycolysis; D-glyceraldehyde 3-phosphate and glycerone phosphate from D-glucose: step 2/4. This chain is Putative glucose-6-phosphate isomerase 2 (pgiA2), found in Rhizobium meliloti (strain 1021) (Ensifer meliloti).